The following is a 321-amino-acid chain: Methionyl-tRNA formyltransferase (321 aa).

113–116 (SILP) serves as a coordination point for (6S)-5,6,7,8-tetrahydrofolate.

It belongs to the Fmt family.

It catalyses the reaction L-methionyl-tRNA(fMet) + (6R)-10-formyltetrahydrofolate = N-formyl-L-methionyl-tRNA(fMet) + (6S)-5,6,7,8-tetrahydrofolate + H(+). In terms of biological role, attaches a formyl group to the free amino group of methionyl-tRNA(fMet). The formyl group appears to play a dual role in the initiator identity of N-formylmethionyl-tRNA by promoting its recognition by IF2 and preventing the misappropriation of this tRNA by the elongation apparatus. The protein is Methionyl-tRNA formyltransferase of Pseudoalteromonas translucida (strain TAC 125).